We begin with the raw amino-acid sequence, 780 residues long: MSDWNEIQRLAADFQRIQLTASAHQLSERNCIEIITKLIAMNKVQVMYTIDGKEYLTPQQLEREIRDELFVHSGRINLVELQQVINVDLTHIDSKVKEMLRGDRSLYLIQGDLIDRDYIDRLAEEINDILQESGQISVSELGKTFNLPTDFLQTNIEKRMGIYIHGQVNPLERGTIYTEAYVARHAAKIRGVFSAITRPTSVSSIIYQYSFPEALLHDILRKLLDEKRLAGSVQGHQSKAIYTPNIYSRTQSNWVLSFFRQNDYIEYDSLTRLDITDPKNYLKKCLNKNVIFLESCVSGQNILGQVQAAIEDVVATPSWVDIMTLLPSPFTTGDASVLLQKHCLKSNKNNTSVQCLCDKFVVSNKFIQNCLQLFDDHMKTKAEKVYFHLLFIDAGKVAAKFASTSSTNPNHSTLTKHDDSNVTGGKKKKGDDSTSSKRKGKGKDRSTPDDLESTRSHIKQNKQDLEFMAIPEIIEVLQREHSNCEDQFLEEIASQLFSPLKRKYQEVAKSVFLASTSSVTSEKRKLHSDAQDKINGLLTNAKLFGKGLQHFSGDAHTTLGKHLLHTLCTEITNIVFSLLISEHIMVDSDPNSLNPETRSSALEKFPNNVKKAASALEKSLSGKDVEQFFDALDVVLGPSICQIMIKKLDKKKERQIIFNHRQSLIEQLNKESKPAMCLHLCTLLLFQRHTQCMIHAPGRCIPQIISFLKQHLTDEQYKTIYEYQQLIIQSIQQSSDKQKPEMSEEPKDSDNSNDNQNIDLQLQEKMTTIKAIALENKKQS.

Polar residues predominate over residues 403–413 (STSSTNPNHST). Disordered regions lie at residues 403-458 (STSS…RSHI) and 734-760 (SSDKQKPEMSEEPKDSDNSNDNQNIDL). Composition is skewed to basic and acidic residues over residues 443-458 (KDRSTPDDLESTRSHI) and 736-750 (DKQKPEMSEEPKDSD).

Belongs to the UFL1 family.

Its function is as follows. E3 UFM1-protein ligase that mediates ufmylation of target proteins. The chain is E3 UFM1-protein ligase 1 homolog from Trichoplax adhaerens (Trichoplax reptans).